A 107-amino-acid polypeptide reads, in one-letter code: MVTTNINNNKSINIISKDITYFNNNNNNNNNNNNNNNNIFLLNEINNQQDRINQLRIDDEFINNYHHTHQETINTRGRRFFKFLLKFNKKKGSNSDTIQVHFFTPYW.

This is an uncharacterized protein from Dictyostelium discoideum (Social amoeba).